A 390-amino-acid polypeptide reads, in one-letter code: NADH-quinone oxidoreductase subunit D (390 aa).

Belongs to the complex I 49 kDa subunit family. NDH-1 is composed of 14 different subunits. Subunits NuoB, C, D, E, F, and G constitute the peripheral sector of the complex.

It localises to the cell membrane. The catalysed reaction is a quinone + NADH + 5 H(+)(in) = a quinol + NAD(+) + 4 H(+)(out). NDH-1 shuttles electrons from NADH, via FMN and iron-sulfur (Fe-S) centers, to quinones in the respiratory chain. The immediate electron acceptor for the enzyme in this species is believed to be ubiquinone. Couples the redox reaction to proton translocation (for every two electrons transferred, four hydrogen ions are translocated across the cytoplasmic membrane), and thus conserves the redox energy in a proton gradient. The sequence is that of NADH-quinone oxidoreductase subunit D from Wolbachia pipientis wMel.